The primary structure comprises 28 residues: Phospholipase A2 (28 aa).

Ca(2+) is bound at residue G28.

Requires Ca(2+) as cofactor. In terms of tissue distribution, expressed by the venom gland.

The protein localises to the secreted. The catalysed reaction is a 1,2-diacyl-sn-glycero-3-phosphocholine + H2O = a 1-acyl-sn-glycero-3-phosphocholine + a fatty acid + H(+). In terms of biological role, PLA2 catalyzes the calcium-dependent hydrolysis of the 2-acyl groups in 3-sn-phosphoglycerides. In Scolopendra dehaani (Thai centipede), this protein is Phospholipase A2.